A 360-amino-acid chain; its full sequence is MKASLLNKLDILQDRFEELTALLGDAEVISDQTRFRAYSREYAEVEPVYAAYKEWCKVQGDLEGAQALLKDSDPDLREMAVEEVREAKEQLLTLESQLQRMLLPKDPNDGRNVFLEIRAGTGGDEAAIFSGDLFRMYSRYAEKRGWRLEILSENEGEHGGYKEIIARVEGENVYGKLKFESGAHRVQRVPETESQGRVHTSACTVAVLPEPDEQAAIEINPADLRVDTYRASGAGGQHVNKTDSAIRITHLPTGIVVECQEERSQHKNRARAMSWLSAKLNDMQTSAAQNAIASERKLLVGSGDRSERIRTYNYPQGRVTDHRINLTLYSLDDILSGGVEAVIEPLLAEYQADQLAALGD.

Q237 bears the N5-methylglutamine mark.

Belongs to the prokaryotic/mitochondrial release factor family. In terms of processing, methylated by PrmC. Methylation increases the termination efficiency of RF1.

It localises to the cytoplasm. Its function is as follows. Peptide chain release factor 1 directs the termination of translation in response to the peptide chain termination codons UAG and UAA. The protein is Peptide chain release factor 1 of Pseudomonas putida (strain GB-1).